Reading from the N-terminus, the 205-residue chain is Putative 3-methyladenine DNA glycosylase (205 aa).

The protein belongs to the DNA glycosylase MPG family.

This is Putative 3-methyladenine DNA glycosylase from Bacillus cereus (strain B4264).